The primary structure comprises 251 residues: Small ribosomal subunit protein uS3 (251 aa).

Residues isoleucine 39–isoleucine 109 form the KH type-2 domain. Residues glutamate 221–proline 239 are compositionally biased toward basic and acidic residues. The segment at glutamate 221–alanine 251 is disordered. Residues arginine 240–alanine 251 are compositionally biased toward basic residues.

This sequence belongs to the universal ribosomal protein uS3 family. Part of the 30S ribosomal subunit. Forms a tight complex with proteins S10 and S14.

Functionally, binds the lower part of the 30S subunit head. Binds mRNA in the 70S ribosome, positioning it for translation. In Chlorobium limicola (strain DSM 245 / NBRC 103803 / 6330), this protein is Small ribosomal subunit protein uS3.